The sequence spans 229 residues: Urease accessory protein UreG (229 aa).

Residue 24-31 participates in GTP binding; that stretch reads GPVGSGKT.

The protein belongs to the SIMIBI class G3E GTPase family. UreG subfamily. In terms of assembly, homodimer. UreD, UreF and UreG form a complex that acts as a GTP-hydrolysis-dependent molecular chaperone, activating the urease apoprotein by helping to assemble the nickel containing metallocenter of UreC. The UreE protein probably delivers the nickel.

It localises to the cytoplasm. Its function is as follows. Facilitates the functional incorporation of the urease nickel metallocenter. This process requires GTP hydrolysis, probably effectuated by UreG. In Albidiferax ferrireducens (strain ATCC BAA-621 / DSM 15236 / T118) (Rhodoferax ferrireducens), this protein is Urease accessory protein UreG.